Consider the following 281-residue polypeptide: NADPH-dependent 7-cyano-7-deazaguanine reductase (281 aa).

Residue 87 to 89 (VES) coordinates substrate. 89–90 (SK) contacts NADPH. Cysteine 188 serves as the catalytic Thioimide intermediate. Aspartate 195 acts as the Proton donor in catalysis. 227 to 228 (HE) is a binding site for substrate. 256-257 (RG) is an NADPH binding site.

It belongs to the GTP cyclohydrolase I family. QueF type 2 subfamily. As to quaternary structure, homodimer.

The protein resides in the cytoplasm. The catalysed reaction is 7-aminomethyl-7-carbaguanine + 2 NADP(+) = 7-cyano-7-deazaguanine + 2 NADPH + 3 H(+). It functions in the pathway tRNA modification; tRNA-queuosine biosynthesis. Catalyzes the NADPH-dependent reduction of 7-cyano-7-deazaguanine (preQ0) to 7-aminomethyl-7-deazaguanine (preQ1). This Aliivibrio salmonicida (strain LFI1238) (Vibrio salmonicida (strain LFI1238)) protein is NADPH-dependent 7-cyano-7-deazaguanine reductase.